The primary structure comprises 344 residues: Phenylalanine--tRNA ligase alpha subunit (344 aa).

Glu269 provides a ligand contact to Mg(2+).

Belongs to the class-II aminoacyl-tRNA synthetase family. Phe-tRNA synthetase alpha subunit type 1 subfamily. Tetramer of two alpha and two beta subunits. Mg(2+) serves as cofactor.

Its subcellular location is the cytoplasm. It catalyses the reaction tRNA(Phe) + L-phenylalanine + ATP = L-phenylalanyl-tRNA(Phe) + AMP + diphosphate + H(+). In Ralstonia pickettii (strain 12J), this protein is Phenylalanine--tRNA ligase alpha subunit.